We begin with the raw amino-acid sequence, 94 residues long: Ubiquitin-like protein ATG12B (94 aa).

N-acetylalanine is present on alanine 2. A Glycyl lysine isopeptide (Gly-Lys) (interchain with K-128 in ATG5) cross-link involves residue glycine 94.

It belongs to the ATG12 family. As to expression, ubiquitous.

Its subcellular location is the cytoplasm. Ubiquitin-like protein involved in cytoplasm to vacuole transport (Cvt) and autophagy vesicles formation. Conjugation with ATG5 through a ubiquitin-like conjugating system involving also ATG7 as an E1-like activating enzyme and ATG10 as an E2-like conjugating enzyme, is essential for its function. ATG12/ATG5 conjugate has an essential role in plant nutrient recycling. This chain is Ubiquitin-like protein ATG12B (ATG12B), found in Arabidopsis thaliana (Mouse-ear cress).